A 414-amino-acid polypeptide reads, in one-letter code: CinA-like protein (414 aa).

This sequence belongs to the CinA family.

The chain is CinA-like protein from Akkermansia muciniphila (strain ATCC BAA-835 / DSM 22959 / JCM 33894 / BCRC 81048 / CCUG 64013 / CIP 107961 / Muc).